The sequence spans 261 residues: 3-methyl-2-oxobutanoate hydroxymethyltransferase (261 aa).

Residues Asp-44 and Asp-83 each coordinate Mg(2+). 3-methyl-2-oxobutanoate is bound by residues 44 to 45 (DS), Asp-83, and Lys-112. Mg(2+) is bound at residue Glu-114. The Proton acceptor role is filled by Glu-181.

The protein belongs to the PanB family. Homodecamer; pentamer of dimers. Mg(2+) serves as cofactor.

The protein localises to the cytoplasm. The enzyme catalyses 3-methyl-2-oxobutanoate + (6R)-5,10-methylene-5,6,7,8-tetrahydrofolate + H2O = 2-dehydropantoate + (6S)-5,6,7,8-tetrahydrofolate. Its pathway is cofactor biosynthesis; (R)-pantothenate biosynthesis; (R)-pantoate from 3-methyl-2-oxobutanoate: step 1/2. Catalyzes the reversible reaction in which hydroxymethyl group from 5,10-methylenetetrahydrofolate is transferred onto alpha-ketoisovalerate to form ketopantoate. The protein is 3-methyl-2-oxobutanoate hydroxymethyltransferase of Acidithiobacillus ferrooxidans (strain ATCC 23270 / DSM 14882 / CIP 104768 / NCIMB 8455) (Ferrobacillus ferrooxidans (strain ATCC 23270)).